A 266-amino-acid chain; its full sequence is Zinc transport system ATP-binding protein TroB (266 aa).

One can recognise an ABC transporter domain in the interval 11-243; it reads VQVDDLTLAY…YVQRAYGGRI (233 aa). 43-50 contacts ATP; it reads GPNGAGKS.

This sequence belongs to the ABC transporter superfamily.

Its function is as follows. Part of an ATP-driven transport system TroABCD for zinc. The protein is Zinc transport system ATP-binding protein TroB (troB) of Treponema pallidum (strain Nichols).